The primary structure comprises 502 residues: Cobyric acid synthase (502 aa).

The GATase cobBQ-type domain occupies 260-433; the sequence is VLRVAVCAVP…WHGSLESDGF (174 aa). The active-site Nucleophile is the Cys341. His425 is a catalytic residue.

It belongs to the CobB/CobQ family. CobQ subfamily.

Its pathway is cofactor biosynthesis; adenosylcobalamin biosynthesis. Catalyzes amidations at positions B, D, E, and G on adenosylcobyrinic A,C-diamide. NH(2) groups are provided by glutamine, and one molecule of ATP is hydrogenolyzed for each amidation. This is Cobyric acid synthase from Streptomyces coelicolor (strain ATCC BAA-471 / A3(2) / M145).